We begin with the raw amino-acid sequence, 157 residues long: Large ribosomal subunit protein eL29 (157 aa).

Over residues 1–26 (MAKSKNHTTHNQSRKWHRNGIKKPRS) the composition is skewed to basic residues. A disordered region spans residues 1-32 (MAKSKNHTTHNQSRKWHRNGIKKPRSQRYESL). Position 5 is an N6-methyllysine (Lys5). Ser31 carries the post-translational modification Phosphoserine. Lys33 carries the post-translational modification N6-acetyllysine. Residues 121-157 (PKAKAKAKDQTKAQAAAPASIPAQAPKGAQATTKATE) are disordered. The segment covering 132–147 (KAQAAAPASIPAQAPK) has biased composition (low complexity). A Phosphoserine modification is found at Ser140.

This sequence belongs to the eukaryotic ribosomal protein eL29 family. Component of the large ribosomal subunit.

It localises to the cytoplasm. Component of the large ribosomal subunit. The ribosome is a large ribonucleoprotein complex responsible for the synthesis of proteins in the cell. In Macaca fascicularis (Crab-eating macaque), this protein is Large ribosomal subunit protein eL29 (RPL29).